Reading from the N-terminus, the 801-residue chain is Phenylalanine--tRNA ligase beta subunit (801 aa).

A tRNA-binding domain is found at 39-148 (AGSFTGVKVG…EDAVIGTDFR (110 aa)). Residues 401–476 (PKPNKVALRR…RIYGYDNIPN (76 aa)) form the B5 domain. Positions 454, 460, 463, and 464 each coordinate Mg(2+). Residues 707–800 (SKFPSNRRDI…VSEKFGAALR (94 aa)) form the FDX-ACB domain.

The protein belongs to the phenylalanyl-tRNA synthetase beta subunit family. Type 1 subfamily. In terms of assembly, tetramer of two alpha and two beta subunits. Mg(2+) is required as a cofactor.

The protein localises to the cytoplasm. It carries out the reaction tRNA(Phe) + L-phenylalanine + ATP = L-phenylalanyl-tRNA(Phe) + AMP + diphosphate + H(+). This Vibrio parahaemolyticus serotype O3:K6 (strain RIMD 2210633) protein is Phenylalanine--tRNA ligase beta subunit.